A 588-amino-acid polypeptide reads, in one-letter code: Proline--tRNA ligase (588 aa).

Belongs to the class-II aminoacyl-tRNA synthetase family. ProS type 1 subfamily. In terms of assembly, homodimer.

It localises to the cytoplasm. The catalysed reaction is tRNA(Pro) + L-proline + ATP = L-prolyl-tRNA(Pro) + AMP + diphosphate. Its function is as follows. Catalyzes the attachment of proline to tRNA(Pro) in a two-step reaction: proline is first activated by ATP to form Pro-AMP and then transferred to the acceptor end of tRNA(Pro). As ProRS can inadvertently accommodate and process non-cognate amino acids such as alanine and cysteine, to avoid such errors it has two additional distinct editing activities against alanine. One activity is designated as 'pretransfer' editing and involves the tRNA(Pro)-independent hydrolysis of activated Ala-AMP. The other activity is designated 'posttransfer' editing and involves deacylation of mischarged Ala-tRNA(Pro). The misacylated Cys-tRNA(Pro) is not edited by ProRS. This chain is Proline--tRNA ligase, found in Corynebacterium glutamicum (strain R).